Reading from the N-terminus, the 320-residue chain is Protein HEXIM1 (320 aa).

The segment at 1–124 (MAEPLLSEFQ…RRRPSKKKRL (124 aa)) is disordered. Residues 9 to 19 (FQHQPQTSNCT) are compositionally biased toward polar residues. A compositionally biased stretch (basic and acidic residues) spans 24–47 (VHEERNPDRPPGAEERVPEEDSRW). S98 is modified (phosphoserine). The span at 109 to 124 (VGKKKHRRRPSKKKRL) shows a compositional bias: basic residues. The basic region; mediates nuclear localization and interaction with 7SK snRNA and NR3C1 stretch occupies residues 111 to 138 (KKKHRRRPSKKKRLWKPYYTLTWEEKKK). The segment at 163–166 (PYNT) is interaction with P-TEFb. The autoinhibitory acidic region; in absence of 7SK snRNA interacts with the basic region preventing interaction with P-TEFb and modulating subcellular localization stretch occupies residues 171–211 (MDDHDQEEPDLKTGLYPKRAAAKSDDTSDEDFMEEAGEEDG). The disordered stretch occupies residues 174–223 (HDQEEPDLKTGLYPKRAAAKSDDTSDEDFMEEAGEEDGGSDGMGGDGSEF). A Phosphoserine modification is found at S194. Position 197 is a phosphothreonine (T197). Over residues 197–212 (TSDEDFMEEAGEEDGG) the composition is skewed to acidic residues. A phosphoserine mark is found at S198, S213, and S221. Residues 244 to 310 (SKQELIKEYL…LTENELHRQQ (67 aa)) adopt a coiled-coil conformation. Positions 247–275 (ELIKEYLELEKCLSRMEDENNRLRLESQR) are mediates interaction with CCNT1. The tract at residues 271-316 (LESQRLDGDDARVRELELELDRLRAENLQLLTENELHRQQERAPLS) is required for inhibition of ESR1-dependent transcription.

This sequence belongs to the HEXIM family. Homooligomer and heterooligomer with HEXIM2; probably dimeric. Core component of the 7SK RNP complex, at least composed of 7SK RNA, LARP7, MEPCE, HEXIM1 (or HEXIM2) and P-TEFb (composed of CDK9 and CCNT1/cyclin-T1). Interacts with the N-CoR complex through NCOR1. Interacts with ESR1 and NR3C1. May interact with NF-kappa-B through RELA. Interacts with CCNT2; mediates formation of a tripartite complex with KPNA2. Part of the HDP-RNP complex composed of at least HEXIM1, PRKDC, XRCC5, XRCC6, paraspeckle proteins (SFPQ, NONO, PSPC1, RBM14, and MATR3) and NEAT1 non-coding RNA.

Its subcellular location is the nucleus. It localises to the cytoplasm. In terms of biological role, transcriptional regulator which functions as a general RNA polymerase II transcription inhibitor. Core component of the 7SK RNP complex: in cooperation with 7SK snRNA sequesters P-TEFb in a large inactive 7SK snRNP complex preventing RNA polymerase II phosphorylation and subsequent transcriptional elongation. May also regulate NF-kappa-B, ESR1, NR3C1 and CIITA-dependent transcriptional activity. Plays a role in the regulation of DNA virus-mediated innate immune response by assembling into the HDP-RNP complex, a complex that serves as a platform for IRF3 phosphorylation and subsequent innate immune response activation through the cGAS-STING pathway. The sequence is that of Protein HEXIM1 (HEXIM1) from Bos taurus (Bovine).